A 340-amino-acid chain; its full sequence is Phosphate acyltransferase (340 aa).

The protein belongs to the PlsX family. Homodimer. Probably interacts with PlsY.

It is found in the cytoplasm. It catalyses the reaction a fatty acyl-[ACP] + phosphate = an acyl phosphate + holo-[ACP]. It participates in lipid metabolism; phospholipid metabolism. Functionally, catalyzes the reversible formation of acyl-phosphate (acyl-PO(4)) from acyl-[acyl-carrier-protein] (acyl-ACP). This enzyme utilizes acyl-ACP as fatty acyl donor, but not acyl-CoA. The polypeptide is Phosphate acyltransferase (Pseudomonas syringae pv. tomato (strain ATCC BAA-871 / DC3000)).